The chain runs to 307 residues: MLQQRTIKTLTRAVGVGLHSGQRVELTLRPAQPDTGIVFRRVDLPEPVDIPITATAVVDTRMASTIGAGGAKVHTVEHLMSACAGLGLDNLYIDITAEEVPILDGSSASFVFLLQSAGVELQNAPKRFIRVKRPVEVREGTGQQLKWARLEPYHGFKLRFDIDFAHPAVDSTGQSAEFDLGEGNYARDIARARTFGFTKDVEMLRSSGLALGGGLDNAIVMDDYKVLNADGLRYDAEFARHKILDAMGDLYLVGKPLLAAYSAFRSGHAMNNLLLRELLAHEDAWEIVTFENERQAPAGFTQPVRAW.

3 residues coordinate Zn(2+): His78, His241, and Asp245. The active-site Proton donor is His268.

It belongs to the LpxC family. Requires Zn(2+) as cofactor.

It catalyses the reaction a UDP-3-O-[(3R)-3-hydroxyacyl]-N-acetyl-alpha-D-glucosamine + H2O = a UDP-3-O-[(3R)-3-hydroxyacyl]-alpha-D-glucosamine + acetate. The protein operates within glycolipid biosynthesis; lipid IV(A) biosynthesis; lipid IV(A) from (3R)-3-hydroxytetradecanoyl-[acyl-carrier-protein] and UDP-N-acetyl-alpha-D-glucosamine: step 2/6. In terms of biological role, catalyzes the hydrolysis of UDP-3-O-myristoyl-N-acetylglucosamine to form UDP-3-O-myristoylglucosamine and acetate, the committed step in lipid A biosynthesis. The polypeptide is UDP-3-O-acyl-N-acetylglucosamine deacetylase (Acidovorax ebreus (strain TPSY) (Diaphorobacter sp. (strain TPSY))).